We begin with the raw amino-acid sequence, 443 residues long: UPF0597 protein DVU_0440 (443 aa).

The protein belongs to the UPF0597 family.

The protein is UPF0597 protein DVU_0440 of Nitratidesulfovibrio vulgaris (strain ATCC 29579 / DSM 644 / CCUG 34227 / NCIMB 8303 / VKM B-1760 / Hildenborough) (Desulfovibrio vulgaris).